Consider the following 151-residue polypeptide: UPF0208 membrane protein YfbV (151 aa).

The next 2 membrane-spanning stretches (helical) occupy residues Tyr46–Leu65 and Leu69–Gly91.

The protein belongs to the UPF0208 family.

It localises to the cell inner membrane. The sequence is that of UPF0208 membrane protein YfbV from Escherichia coli O1:K1 / APEC.